We begin with the raw amino-acid sequence, 145 residues long: 3-hydroxyacyl-[acyl-carrier-protein] dehydratase FabZ (145 aa).

His-52 is a catalytic residue.

Belongs to the thioester dehydratase family. FabZ subfamily.

The protein resides in the cytoplasm. It catalyses the reaction a (3R)-hydroxyacyl-[ACP] = a (2E)-enoyl-[ACP] + H2O. In terms of biological role, involved in unsaturated fatty acids biosynthesis. Catalyzes the dehydration of short chain beta-hydroxyacyl-ACPs and long chain saturated and unsaturated beta-hydroxyacyl-ACPs. The polypeptide is 3-hydroxyacyl-[acyl-carrier-protein] dehydratase FabZ (Deinococcus radiodurans (strain ATCC 13939 / DSM 20539 / JCM 16871 / CCUG 27074 / LMG 4051 / NBRC 15346 / NCIMB 9279 / VKM B-1422 / R1)).